The following is a 377-amino-acid chain: tRNA pseudouridine synthase Pus10 (377 aa).

Residue D206 is the Nucleophile of the active site. Positions 270 and 339 each coordinate substrate.

Belongs to the pseudouridine synthase Pus10 family.

The catalysed reaction is uridine(54) in tRNA = pseudouridine(54) in tRNA. It catalyses the reaction uridine(55) in tRNA = pseudouridine(55) in tRNA. In terms of biological role, responsible for synthesis of pseudouridine from uracil-54 and uracil-55 in the psi GC loop of transfer RNAs. The chain is tRNA pseudouridine synthase Pus10 from Picrophilus torridus (strain ATCC 700027 / DSM 9790 / JCM 10055 / NBRC 100828 / KAW 2/3).